We begin with the raw amino-acid sequence, 201 residues long: Receptor expression-enhancing protein 1 (201 aa).

2 consecutive transmembrane segments (helical) span residues 1-21 (MVSWIISRLVVLIFGTLYPAY) and 35-55 (YVKWMMYWIIFALFTTAETFT). Serine 152 bears the Phosphoserine mark. The interval 158–201 (TIRGDGAPAPSGPPPPGTGRSSGKHSQPKMSRSASESAGSSGTA) is disordered. Low complexity predominate over residues 188-201 (SRSASESAGSSGTA).

It belongs to the DP1 family. In terms of assembly, interacts with OLFR992. Interacts with SPAST and ATL1. Interacts (via C-terminus) with microtubules. Interacts with ZFYVE27. As to expression, detected in olfactory sensory neurons of the olfactory epithelium, and in total brain.

It localises to the membrane. It is found in the mitochondrion membrane. Its subcellular location is the endoplasmic reticulum. In terms of biological role, required for endoplasmic reticulum (ER) network formation, shaping and remodeling; it links ER tubules to the cytoskeleton. May also enhance the cell surface expression of odorant receptors. This chain is Receptor expression-enhancing protein 1 (Reep1), found in Mus musculus (Mouse).